A 928-amino-acid polypeptide reads, in one-letter code: Protein NETWORKED 2B (928 aa).

One can recognise an NAB domain in the interval 10-90 (YSWWWASHIR…ERYDHLSTEL (81 aa)). Positions 108–144 (PLVDDDDDDDDDNPKKPPKHLHLIPSGTNIPQVPEVP) are disordered. The segment covering 110–119 (VDDDDDDDDD) has biased composition (acidic residues). Coiled coils occupy residues 207–309 (SYEQ…AKKA) and 360–445 (ALLK…VKMD). Disordered stretches follow at residues 447 to 472 (DVEG…SISN) and 489 to 529 (KQSR…EERR). Positions 457–468 (DIQEEDTVEDSD) are enriched in acidic residues. Over residues 489 to 506 (KQSRDQESMQEEKSETRD) the composition is skewed to basic and acidic residues. Residues 547–574 (LLDEYSSVLRDYREVKRKLSEVEKKNRD) are a coiled coil. Residues 620-651 (AESVSISHSSNSSFSMPPLPQRGDLKRASEQE) form a disordered region. The segment covering 622-634 (SVSISHSSNSSFS) has biased composition (low complexity). Positions 642–651 (GDLKRASEQE) are enriched in basic and acidic residues.

The protein belongs to the NET family.

Its function is as follows. Plant-specific actin binding protein. May be part of a membrane-cytoskeletal adapter complex. This Arabidopsis thaliana (Mouse-ear cress) protein is Protein NETWORKED 2B.